A 602-amino-acid chain; its full sequence is Elongation factor 4 (602 aa).

The 183-residue stretch at 6–188 folds into the tr-type G domain; the sequence is DHIRNFSIVA…AIVNKLPAPK (183 aa). GTP is bound by residues 18-23 and 135-138; these read DHGKST and NKID.

Belongs to the TRAFAC class translation factor GTPase superfamily. Classic translation factor GTPase family. LepA subfamily.

Its subcellular location is the cell inner membrane. The catalysed reaction is GTP + H2O = GDP + phosphate + H(+). Its function is as follows. Required for accurate and efficient protein synthesis under certain stress conditions. May act as a fidelity factor of the translation reaction, by catalyzing a one-codon backward translocation of tRNAs on improperly translocated ribosomes. Back-translocation proceeds from a post-translocation (POST) complex to a pre-translocation (PRE) complex, thus giving elongation factor G a second chance to translocate the tRNAs correctly. Binds to ribosomes in a GTP-dependent manner. This is Elongation factor 4 from Brucella melitensis biotype 2 (strain ATCC 23457).